Here is a 499-residue protein sequence, read N- to C-terminus: Laccase (499 aa).

Plastocyanin-like domains follow at residues 2–127 and 139–281; these read VGPV…FVVY and VDND…ILRY. N-linked (GlcNAc...) asparagine glycans are attached at residues N51 and N54. H64, H66, H109, and H111 together coordinate Cu cation. Cystine bridges form between C85–C488 and C117–C205. Y196 carries the 3'-nitrotyrosine modification. 4 N-linked (GlcNAc...) asparagine glycosylation sites follow: N208, N217, N292, and N333. Residues 348 to 470 form the Plastocyanin-like 3 domain; the sequence is SVPVLLQILS…GGFAVVQAED (123 aa). At Y372 the chain carries 3'-nitrotyrosine. Residue N377 is glycosylated (N-linked (GlcNAc...) asparagine). Cu cation contacts are provided by H395, H398, and H400. N416 and N436 each carry an N-linked (GlcNAc...) asparagine glycan. 4 residues coordinate Cu cation: H452, C453, H454, and H458.

The protein belongs to the multicopper oxidase family. Cu cation serves as cofactor.

Its subcellular location is the secreted. The enzyme catalyses 4 hydroquinone + O2 = 4 benzosemiquinone + 2 H2O. In terms of biological role, lignin degradation and detoxification of lignin-derived products. The sequence is that of Laccase from Trametes maxima (White-rot fungus).